The following is a 303-amino-acid chain: MRKKLRAVIIGPGNIGTDLLIKMKRSDWIEPVWMVGIDPDSDGLKRARDMGIKTTHQGIDDFIDYLIADDIRIAFDATSAYVHEENSRKLNALGVVMIDLTPAAIGPYCIPPVNLEEHANNLEMNVNMVTCGGQATIPMVAAVSSVQKVDYAEIIATVSSRSVGPGTRANIDEFTRTTASAVEQIGGARKGKAIIVINPAEPPLMMRDTIHCLLSEDPDEVNISKSVYNMVKEVQKYVPGYRLVNGPIFDGRKVSIFMEVEGLGDFLPTYSGNLDIMTAAALRTAEMFAERVASKAITLPNRH.

The Acyl-thioester intermediate role is filled by Cys131. NAD(+) contacts are provided by residues 162–170 and Asn273; that span reads SVGPGTRAN.

This sequence belongs to the acetaldehyde dehydrogenase family.

It catalyses the reaction acetaldehyde + NAD(+) + CoA = acetyl-CoA + NADH + H(+). In Marinomonas sp. (strain MWYL1), this protein is Acetaldehyde dehydrogenase.